Here is a 362-residue protein sequence, read N- to C-terminus: Probable dual-specificity RNA methyltransferase RlmN (362 aa).

E105 acts as the Proton acceptor in catalysis. One can recognise a Radical SAM core domain in the interval 111 to 344 (HEYGNSICVT…VTIRREQGHD (234 aa)). C118 and C349 form a disulfide bridge. 3 residues coordinate [4Fe-4S] cluster: C125, C129, and C132. S-adenosyl-L-methionine is bound by residues 175–176 (GE), S207, 230–232 (SLH), and N306. The active-site S-methylcysteine intermediate is the C349.

The protein belongs to the radical SAM superfamily. RlmN family. The cofactor is [4Fe-4S] cluster.

It localises to the cytoplasm. It catalyses the reaction adenosine(2503) in 23S rRNA + 2 reduced [2Fe-2S]-[ferredoxin] + 2 S-adenosyl-L-methionine = 2-methyladenosine(2503) in 23S rRNA + 5'-deoxyadenosine + L-methionine + 2 oxidized [2Fe-2S]-[ferredoxin] + S-adenosyl-L-homocysteine. The enzyme catalyses adenosine(37) in tRNA + 2 reduced [2Fe-2S]-[ferredoxin] + 2 S-adenosyl-L-methionine = 2-methyladenosine(37) in tRNA + 5'-deoxyadenosine + L-methionine + 2 oxidized [2Fe-2S]-[ferredoxin] + S-adenosyl-L-homocysteine. Its function is as follows. Specifically methylates position 2 of adenine 2503 in 23S rRNA and position 2 of adenine 37 in tRNAs. The chain is Probable dual-specificity RNA methyltransferase RlmN from Bacillus cereus (strain B4264).